The chain runs to 104 residues: L-rhamnose mutarotase (104 aa).

Tyrosine 18 contributes to the substrate binding site. The Proton donor role is filled by histidine 22. Residues tyrosine 41 and 76–77 (WW) each bind substrate.

Belongs to the rhamnose mutarotase family. Homodimer.

The protein localises to the cytoplasm. The catalysed reaction is alpha-L-rhamnose = beta-L-rhamnose. It participates in carbohydrate metabolism; L-rhamnose metabolism. Functionally, involved in the anomeric conversion of L-rhamnose. The protein is L-rhamnose mutarotase of Salmonella agona (strain SL483).